Consider the following 368-residue polypeptide: 4-hydroxy-3-methylbut-2-en-1-yl diphosphate synthase (flavodoxin) (368 aa).

[4Fe-4S] cluster is bound by residues C268, C271, C303, and E310.

Belongs to the IspG family. It depends on [4Fe-4S] cluster as a cofactor.

It catalyses the reaction (2E)-4-hydroxy-3-methylbut-2-enyl diphosphate + oxidized [flavodoxin] + H2O + 2 H(+) = 2-C-methyl-D-erythritol 2,4-cyclic diphosphate + reduced [flavodoxin]. It functions in the pathway isoprenoid biosynthesis; isopentenyl diphosphate biosynthesis via DXP pathway; isopentenyl diphosphate from 1-deoxy-D-xylulose 5-phosphate: step 5/6. In terms of biological role, converts 2C-methyl-D-erythritol 2,4-cyclodiphosphate (ME-2,4cPP) into 1-hydroxy-2-methyl-2-(E)-butenyl 4-diphosphate. This is 4-hydroxy-3-methylbut-2-en-1-yl diphosphate synthase (flavodoxin) from Listeria monocytogenes serovar 1/2a (strain ATCC BAA-679 / EGD-e).